Consider the following 158-residue polypeptide: MMRELLRNLIEDKTVINYKKWWMECKDAQETKLLAILCFYDIDDLPEETTAGLDKFVLDKLRVLSLLSLCELSTEVNYQEIKEKCDLKTDGEVEKLLIRAELFVDLKIDSVARRATVLEYKISRDVYSGEKGVPFHTPVRSKINILSALINWRSSLTD.

Positions 5–119 (LLRNLIEDKT…SVARRATVLE (115 aa)) constitute a PCI domain.

In terms of assembly, component of a COP9 signalosome-like (CSN) complex.

The protein resides in the cytoplasm. It is found in the nucleus. Functionally, component of the COP9 signalosome (CSN) complex that acts as a regulator of the ubiquitin (Ubl) conjugation pathway by mediating the deneddylation of the cullin subunit of SCF-type E3 ubiquitin-protein ligase complexes. The complex is involved in the regulation of the mating pheromone response. The sequence is that of COP9 signalosome complex subunit 9 (CSN9) from Kluyveromyces lactis (strain ATCC 8585 / CBS 2359 / DSM 70799 / NBRC 1267 / NRRL Y-1140 / WM37) (Yeast).